Reading from the N-terminus, the 702-residue chain is Elongation factor G (702 aa).

One can recognise a tr-type G domain in the interval 8 to 290; it reads SRYRNIGISA…AIIEFLPAPN (283 aa). GTP contacts are provided by residues 17–24, 88–92, and 142–145; these read AHIDAGKT, DTPGH, and NKMD.

This sequence belongs to the TRAFAC class translation factor GTPase superfamily. Classic translation factor GTPase family. EF-G/EF-2 subfamily.

It is found in the cytoplasm. In terms of biological role, catalyzes the GTP-dependent ribosomal translocation step during translation elongation. During this step, the ribosome changes from the pre-translocational (PRE) to the post-translocational (POST) state as the newly formed A-site-bound peptidyl-tRNA and P-site-bound deacylated tRNA move to the P and E sites, respectively. Catalyzes the coordinated movement of the two tRNA molecules, the mRNA and conformational changes in the ribosome. In Buchnera aphidicola subsp. Acyrthosiphon pisum (strain 5A), this protein is Elongation factor G.